A 505-amino-acid chain; its full sequence is Probable inorganic carbon transporter subunit DabB (505 aa).

13 consecutive transmembrane segments (helical) span residues 9–29 (SLLTLFFIMLMASGISGLLFL), 37–57 (FVRIHIGILALPLLVSLLILA), 68–88 (WHLDSLACLMTFFVLAIGFII), 105–123 (YFTLFTFTTGAASMTWLSG), 162–182 (LFLLSWFSLFFAMMWLFHATG), 204–224 (TGIQLLIVLAVIIPAAQWPFQ), 231–251 (IVAPTPVSAIMHAGLVNAGGI), 259–279 (LFHGGIASIILLLLASISVLI), 303–323 (GFMLIQCALGAYIAAIIHLIL), 355–375 (LWVMAGRILSLVIGVAFWLTA), 382–402 (LISALILGWSLSVSWDQLVAF), 410–430 (IAGLTVLGGAALVYFIIHHLF), and 446–466 (MSAVMIVVCLLLFGSALGTWV).

It belongs to the inorganic carbon transporter (TC 9.A.2) DabB family. In terms of assembly, forms a complex with DabA.

It is found in the cell membrane. In terms of biological role, part of an energy-coupled inorganic carbon pump. The sequence is that of Probable inorganic carbon transporter subunit DabB from Bacillus subtilis (strain 168).